Here is a 989-residue protein sequence, read N- to C-terminus: Autotransporter adhesin/invasin TibA (989 aa).

A signal peptide spans 1 to 54; the sequence is MNKVYNTVWNESTGTWVVTSELTRKGGLRPRQIKRTVLAGLIAGLLMPSMPALA. S74, S86, S93, S94, S97, S100, S112, S113, S116, S119, S124, S131, S132, and S135 each carry an O-alpha-linked (D-glycero-D-manno-heptose) serine glycan. 12 repeat units span residues 82 to 100, 101 to 119, 120 to 138, 139 to 157, 158 to 176, 177 to 195, 196 to 214, 215 to 233, 234 to 251, 252 to 270, 271 to 289, and 290 to 308. The 12 X 19 AA approximate repeats stretch occupies residues 82 to 308; sequence TTINSGGKQY…QVEAGGSASK (227 aa). Polar residues predominate over residues 110–123; sequence HVSSGGSATSSTIN. Positions 110-146 are disordered; sequence HVSSGGSATSSTINSGGHQHVSSGGSATNTTVNNGGR. A compositionally biased stretch (low complexity) spans 124–135; the sequence is SGGHQHVSSGGS. Residues 136 to 146 are compositionally biased toward polar residues; sequence ATNTTVNNGGR. O-alpha-linked (D-glycero-D-manno-heptose) serine glycosylation is found at S151, S154, S162, S170, S176, S181, S188, S189, S200, S226, S227, S230, S238, S248, S263, S264, S275, S294, S305, S313, and S322. The tract at residues 623–686 is disordered; that stretch reads WYLKADTPPP…GTSSSPVRRT (64 aa). The segment covering 629–638 has biased composition (pro residues); sequence TPPPVTPPTN. A run of 8 repeats spans residues 639 to 643, 644 to 648, 649 to 653, 654 to 658, 659 to 663, 664 to 668, 669 to 673, and 674 to 678. The segment covering 639–667 has biased composition (low complexity); the sequence is PDADNPDAGNPDAGNPDAGNPDAGNPDAG. An 8 X 5 AA repeats of P-[DG]-[AGT]-[DGA]-[NKT] region spans residues 639-678; sequence PDADNPDAGNPDAGNPDAGNPDAGNPDAGKPGTGKPDAGT. One can recognise an Autotransporter domain in the interval 721-989; sequence NTRAPGGVWG…TGGVGFRINF (269 aa).

Homohexamer. Post-translationally, glycosylated by TibC. Glycosylation is required for adhesion to and invasion of host cells. Glycosylation is dispensable for bacterial autoaggregation and biofilm formation.

Its subcellular location is the cell outer membrane. In terms of biological role, mediates both adhesion to and invasion of human intestine epithelial cells. Also mediates bacterial cell aggregation via intercellular TibA-TibA interaction. Enhances biofilm formation. This Escherichia coli O78:H11 (strain H10407 / ETEC) protein is Autotransporter adhesin/invasin TibA.